The following is a 348-amino-acid chain: Selenide, water dikinase (348 aa).

The active site involves Cys17. ATP contacts are provided by residues Lys20 and Thr47–Asp49. Asp50 serves as a coordination point for Mg(2+). Residues Asp67, Asp90, and Gly138–Thr140 each bind ATP. Residue Asp90 participates in Mg(2+) binding. Residue Asp226 participates in Mg(2+) binding.

The protein belongs to the selenophosphate synthase 1 family. Class I subfamily. Homodimer. The cofactor is Mg(2+).

The enzyme catalyses hydrogenselenide + ATP + H2O = selenophosphate + AMP + phosphate + 2 H(+). In terms of biological role, synthesizes selenophosphate from selenide and ATP. This chain is Selenide, water dikinase, found in Porphyromonas gingivalis (strain ATCC BAA-308 / W83).